The chain runs to 129 residues: Phosphoribosyl-AMP cyclohydrolase (129 aa).

Residue aspartate 85 coordinates Mg(2+). Position 86 (cysteine 86) interacts with Zn(2+). 2 residues coordinate Mg(2+): aspartate 87 and aspartate 89. Cysteine 102 and cysteine 109 together coordinate Zn(2+).

Belongs to the PRA-CH family. In terms of assembly, homodimer. Mg(2+) is required as a cofactor. Zn(2+) serves as cofactor.

Its subcellular location is the cytoplasm. The enzyme catalyses 1-(5-phospho-beta-D-ribosyl)-5'-AMP + H2O = 1-(5-phospho-beta-D-ribosyl)-5-[(5-phospho-beta-D-ribosylamino)methylideneamino]imidazole-4-carboxamide. Its pathway is amino-acid biosynthesis; L-histidine biosynthesis; L-histidine from 5-phospho-alpha-D-ribose 1-diphosphate: step 3/9. In terms of biological role, catalyzes the hydrolysis of the adenine ring of phosphoribosyl-AMP. The chain is Phosphoribosyl-AMP cyclohydrolase from Methanococcus maripaludis (strain C5 / ATCC BAA-1333).